A 76-amino-acid chain; its full sequence is Waprin-Rha1 (76 aa).

An N-terminal signal peptide occupies residues 1–24 (MQARVFLLLLGVILLGMMGPMVSA). One can recognise a WAP domain in the interval 25–75 (QDGKAGSCPDVNQPIPPLGVCKTTCATDSNCPDIQKCCKNGCGHMSCTRPS). 4 disulfide bridges follow: cysteine 32/cysteine 62, cysteine 45/cysteine 66, cysteine 49/cysteine 61, and cysteine 55/cysteine 71.

Belongs to the venom waprin family. In terms of tissue distribution, expressed by the venom gland.

It localises to the secreted. In terms of biological role, damages membranes of susceptible bacteria. Has no hemolytic activity. Not toxic to mice. Does not inhibit the proteinases elastase and cathepsin G. In Rhabdophis tigrinus tigrinus (Tiger keelback snake), this protein is Waprin-Rha1.